The following is a 65-amino-acid chain: Large ribosomal subunit protein bL35 (65 aa).

The disordered stretch occupies residues 1–46 (MPKMKTRQSAAKRYEVTGSGKLRRRRAGKNHLLQHKSAARKRSLST). Positions 21 to 44 (KLRRRRAGKNHLLQHKSAARKRSL) are enriched in basic residues.

It belongs to the bacterial ribosomal protein bL35 family.

This chain is Large ribosomal subunit protein bL35, found in Gloeobacter violaceus (strain ATCC 29082 / PCC 7421).